The following is a 383-amino-acid chain: Phospho-N-acetylmuramoyl-pentapeptide-transferase (383 aa).

A run of 9 helical transmembrane segments spans residues 26 to 46, 73 to 93, 98 to 118, 131 to 151, 182 to 202, 221 to 241, 258 to 278, 283 to 305, and 360 to 380; these read TAGA…GVIE, TMGG…WAEL, IILL…DDFL, IYKI…LYYF, IFLP…IPFA, GLAI…SYVS, AGEV…FLWF, AQVF…IALF, and QVVF…IATL.

This sequence belongs to the glycosyltransferase 4 family. MraY subfamily. Mg(2+) is required as a cofactor.

It localises to the cell inner membrane. The catalysed reaction is UDP-N-acetyl-alpha-D-muramoyl-L-alanyl-gamma-D-glutamyl-meso-2,6-diaminopimeloyl-D-alanyl-D-alanine + di-trans,octa-cis-undecaprenyl phosphate = di-trans,octa-cis-undecaprenyl diphospho-N-acetyl-alpha-D-muramoyl-L-alanyl-D-glutamyl-meso-2,6-diaminopimeloyl-D-alanyl-D-alanine + UMP. The protein operates within cell wall biogenesis; peptidoglycan biosynthesis. Functionally, catalyzes the initial step of the lipid cycle reactions in the biosynthesis of the cell wall peptidoglycan: transfers peptidoglycan precursor phospho-MurNAc-pentapeptide from UDP-MurNAc-pentapeptide onto the lipid carrier undecaprenyl phosphate, yielding undecaprenyl-pyrophosphoryl-MurNAc-pentapeptide, known as lipid I. The sequence is that of Phospho-N-acetylmuramoyl-pentapeptide-transferase from Brachyspira hyodysenteriae (strain ATCC 49526 / WA1).